A 458-amino-acid polypeptide reads, in one-letter code: Zinc finger protein 19 (458 aa).

The KRAB domain maps to 14-85 (VTFEDVAVHF…EAQDDPPAER (72 aa)). C2H2-type zinc fingers lie at residues 161 to 183 (FICE…QRIH), 189 to 211 (FECS…QRIH), 217 to 239 (YQCE…QRIH), 245 to 267 (YYCT…QRIH), 273 to 295 (YECN…QKIH), 301 to 323 (YECN…QRIH), 329 to 351 (YSCK…QRIH), 357 to 379 (FDCV…LRIH), and 385 to 407 (YVCD…QRIH). The C2H2-type 10; atypical zinc-finger motif lies at 413–433 (YECSKYEKAFGTSSQLGHLEH).

Belongs to the krueppel C2H2-type zinc-finger protein family.

The protein resides in the nucleus. May be involved in transcriptional regulation. The polypeptide is Zinc finger protein 19 (ZNF19) (Homo sapiens (Human)).